Here is a 62-residue protein sequence, read N- to C-terminus: Large ribosomal subunit protein bL28 (62 aa).

The protein belongs to the bacterial ribosomal protein bL28 family.

This chain is Large ribosomal subunit protein bL28, found in Helicobacter pylori (strain P12).